We begin with the raw amino-acid sequence, 176 residues long: ATP synthase subunit b, chloroplastic (176 aa).

Residues 27–49 (ILNLAAVFALLAYVGTDFVSSLL) form a helical membrane-spanning segment.

The protein belongs to the ATPase B chain family. F-type ATPases have 2 components, F(1) - the catalytic core - and F(0) - the membrane proton channel. F(1) has five subunits: alpha(3), beta(3), gamma(1), delta(1), epsilon(1). F(0) has four main subunits: a(1), b(1), b'(1) and c(10-14). The alpha and beta chains form an alternating ring which encloses part of the gamma chain. F(1) is attached to F(0) by a central stalk formed by the gamma and epsilon chains, while a peripheral stalk is formed by the delta, b and b' chains.

The protein resides in the plastid. The protein localises to the chloroplast thylakoid membrane. F(1)F(0) ATP synthase produces ATP from ADP in the presence of a proton or sodium gradient. F-type ATPases consist of two structural domains, F(1) containing the extramembraneous catalytic core and F(0) containing the membrane proton channel, linked together by a central stalk and a peripheral stalk. During catalysis, ATP synthesis in the catalytic domain of F(1) is coupled via a rotary mechanism of the central stalk subunits to proton translocation. Functionally, component of the F(0) channel, it forms part of the peripheral stalk, linking F(1) to F(0). This chain is ATP synthase subunit b, chloroplastic, found in Nephroselmis olivacea (Green alga).